A 134-amino-acid chain; its full sequence is ATP synthase epsilon chain (134 aa).

A disordered region spans residues 100-134 (NQKLQNENLSEEEKEHYEKQRSRSQALLNLASAKV). A compositionally biased stretch (basic and acidic residues) spans 110 to 120 (EEEKEHYEKQR).

This sequence belongs to the ATPase epsilon chain family. In terms of assembly, F-type ATPases have 2 components, CF(1) - the catalytic core - and CF(0) - the membrane proton channel. CF(1) has five subunits: alpha(3), beta(3), gamma(1), delta(1), epsilon(1). CF(0) has three main subunits: a, b and c.

It localises to the cell inner membrane. Produces ATP from ADP in the presence of a proton gradient across the membrane. The protein is ATP synthase epsilon chain of Sulfurihydrogenibium sp. (strain YO3AOP1).